A 327-amino-acid chain; its full sequence is Phenylalanine--tRNA ligase alpha subunit (327 aa).

Glu-252 contributes to the Mg(2+) binding site.

It belongs to the class-II aminoacyl-tRNA synthetase family. Phe-tRNA synthetase alpha subunit type 1 subfamily. As to quaternary structure, tetramer of two alpha and two beta subunits. Mg(2+) serves as cofactor.

Its subcellular location is the cytoplasm. It carries out the reaction tRNA(Phe) + L-phenylalanine + ATP = L-phenylalanyl-tRNA(Phe) + AMP + diphosphate + H(+). In Yersinia enterocolitica serotype O:8 / biotype 1B (strain NCTC 13174 / 8081), this protein is Phenylalanine--tRNA ligase alpha subunit.